The sequence spans 237 residues: uncharacterized protein (237 aa).

The protein belongs to the bactofilin family.

This is an uncharacterized protein from Bacillus subtilis (strain 168).